A 62-amino-acid polypeptide reads, in one-letter code: Large ribosomal subunit protein bL28 (62 aa).

This sequence belongs to the bacterial ribosomal protein bL28 family.

The protein is Large ribosomal subunit protein bL28 of Streptococcus thermophilus (strain CNRZ 1066).